Reading from the N-terminus, the 365-residue chain is LIM and cysteine-rich domains protein 1 (365 aa).

A Phosphoserine modification is found at Ser-16. Positions 99 to 206 (MIMTNPIATG…GEVALPGQGG (108 aa)) constitute a PET domain. A disordered region spans residues 200–235 (ALPGQGGLPKEEGKQQEKPEGAETTAATTNGSLSDP). Residues 208–220 (PKEEGKQQEKPEG) are compositionally biased toward basic and acidic residues. 2 consecutive LIM zinc-binding domains span residues 241 to 306 (YVCE…SLRP) and 307 to 365 (RCSG…SKRS).

As to quaternary structure, interacts with GATA1 and GATA4. Interacts with beta-dystroglycan. Interacts with GATA6. Expressed in the heart (at protein level). Expressed in many tissues with highest abundance in skeletal muscle.

The protein localises to the cytoplasm. Its subcellular location is the nucleus. Transcriptional cofactor that restricts GATA6 function by inhibiting DNA-binding, resulting in repression of GATA6 transcriptional activation of downstream target genes. Represses GATA6-mediated trans activation of lung- and cardiac tissue-specific promoters. Inhibits DNA-binding by GATA4 and GATA1 to the cTNC promoter. Plays a critical role in the development of cardiac hypertrophy via activation of calcineurin/nuclear factor of activated T-cells signaling pathway. The chain is LIM and cysteine-rich domains protein 1 (LMCD1) from Homo sapiens (Human).